A 344-amino-acid polypeptide reads, in one-letter code: Anthranilate phosphoribosyltransferase (344 aa).

5-phospho-alpha-D-ribose 1-diphosphate is bound by residues Gly-80, 83–84 (GD), Thr-88, 90–93 (NIST), 108–116 (KHGNRSISS), and Ser-120. Gly-80 serves as a coordination point for anthranilate. Ser-92 serves as a coordination point for Mg(2+). Asn-111 lines the anthranilate pocket. Arg-166 contacts anthranilate. Mg(2+) contacts are provided by Asp-229 and Glu-230.

Belongs to the anthranilate phosphoribosyltransferase family. Homodimer. Mg(2+) serves as cofactor.

The catalysed reaction is N-(5-phospho-beta-D-ribosyl)anthranilate + diphosphate = 5-phospho-alpha-D-ribose 1-diphosphate + anthranilate. Its pathway is amino-acid biosynthesis; L-tryptophan biosynthesis; L-tryptophan from chorismate: step 2/5. In terms of biological role, catalyzes the transfer of the phosphoribosyl group of 5-phosphorylribose-1-pyrophosphate (PRPP) to anthranilate to yield N-(5'-phosphoribosyl)-anthranilate (PRA). This Chloroherpeton thalassium (strain ATCC 35110 / GB-78) protein is Anthranilate phosphoribosyltransferase.